A 111-amino-acid chain; its full sequence is WAP four-disulfide core domain protein 12 (111 aa).

The signal sequence occupies residues 1–23 (MGSSSFLVLMVSLTLVTLVAAEG). The WAP domain occupies 27-74 (GIEKAGVCPADNVRCFKSDPPQCHTDQDCLGERKCCYLHCGFKCVIPV). Intrachain disulfides connect Cys34–Cys62, Cys41–Cys66, Cys49–Cys61, and Cys55–Cys70. The interval 80–111 (GGNKDEDVSGPCPEPGWEAKSPGSSSTGCPQK) is disordered. Residues 101–111 (PGSSSTGCPQK) are compositionally biased toward polar residues.

The protein localises to the secreted. Its function is as follows. Antibacterial protein. Putative acid-stable proteinase inhibitor. This is WAP four-disulfide core domain protein 12 (WFDC12) from Chlorocebus aethiops (Green monkey).